A 164-amino-acid polypeptide reads, in one-letter code: Peptidyl-prolyl cis-trans isomerase A (164 aa).

Position 1 is an N-acetylmethionine (Met1). Val2 carries the post-translational modification N-acetylvaline; in Peptidyl-prolyl cis-trans isomerase A, N-terminally processed. Residues 7 to 163 (FFDIAVDGEP…KKITIADCGQ (157 aa)) form the PPIase cyclophilin-type domain. Lys28 carries the post-translational modification N6-acetyllysine; alternate. A Glycyl lysine isopeptide (Lys-Gly) (interchain with G-Cter in SUMO2); alternate cross-link involves residue Lys28. Lys28 participates in a covalent cross-link: Glycyl lysine isopeptide (Lys-Gly) (interchain with G-Cter in ubiquitin); alternate. 2 positions are modified to N6-acetyllysine: Lys44 and Lys76. A disulfide bond links Cys62 and Cys161. Phosphoserine is present on Ser77. Lys82 is subject to N6-acetyllysine; alternate. Lys82 is covalently cross-linked (Glycyl lysine isopeptide (Lys-Gly) (interchain with G-Cter in SUMO2); alternate). Thr93 is modified (phosphothreonine). The N-linked (GlcNAc...) asparagine glycan is linked to Asn108. N6-acetyllysine occurs at positions 125, 131, and 133.

The protein belongs to the cyclophilin-type PPIase family. PPIase A subfamily. Interacts with protein phosphatase PPP3CA/calcineurin A. Interacts with isoform 2 of BSG/CD147. Interacts with FOXO1; the interaction promotes FOXO1 dephosphorylation, nuclear accumulation and transcriptional activity. Interacts with integrin ITGA2B:ITGB3; the interaction is ROS and peptidyl-prolyl cis-trans isomerase (PPIase) activity-dependent and is increased in the presence of thrombin. Interacts with MAP3K5. Interacts with TARDBP; the interaction is dependent on the RNA-binding activity of TARDBP and the PPIase activity of PPIA/CYPA and the acetylation of PPIA/CYPA at Lys-125 favors the interaction. Interacts with HNRNPA1, HNRNPA2B1, HNRNPC, RBMX, HNRNPK and HNRNPM. In terms of processing, acetylation at Lys-125 markedly inhibits catalysis of cis to trans isomerization. PPIA acetylation also antagonizes the immunosuppressive effects of cyclosporine by inhibiting the sequential steps of cyclosporine binding and calcineurin inhibition. Acetylation at Lys-125 favors the interaction with TARDBP.

It localises to the cytoplasm. The protein resides in the secreted. The protein localises to the nucleus. It carries out the reaction [protein]-peptidylproline (omega=180) = [protein]-peptidylproline (omega=0). With respect to regulation, binds cyclosporin A (CsA). CsA mediates some of its effects via an inhibitory action on PPIase. In terms of biological role, catalyzes the cis-trans isomerization of proline imidic peptide bonds in oligopeptides. Exerts a strong chemotactic effect on leukocytes partly through activation of one of its membrane receptors BSG/CD147, initiating a signaling cascade that culminates in MAPK/ERK activation. Activates endothelial cells (ECs) in a proinflammatory manner by stimulating activation of NF-kappa-B and ERK, JNK and p38 MAP-kinases and by inducing expression of adhesion molecules including SELE and VCAM1. Induces apoptosis in ECs by promoting the FOXO1-dependent expression of CCL2 and BCL2L11 which are involved in EC chemotaxis and apoptosis. In response to oxidative stress, initiates proapoptotic and antiapoptotic signaling in ECs via activation of NF-kappa-B and AKT1 and up-regulation of antiapoptotic protein BCL2. Negatively regulates MAP3K5/ASK1 kinase activity, autophosphorylation and oxidative stress-induced apoptosis mediated by MAP3K5/ASK1. Necessary for the assembly of TARDBP in heterogeneous nuclear ribonucleoprotein (hnRNP) complexes and regulates TARDBP binding to RNA UG repeats and TARDBP-dependent expression of HDAC6, ATG7 and VCP which are involved in clearance of protein aggregates. Plays an important role in platelet activation and aggregation. Regulates calcium mobilization and integrin ITGA2B:ITGB3 bidirectional signaling via increased ROS production as well as by facilitating the interaction between integrin and the cell cytoskeleton. Binds heparan sulfate glycosaminoglycans. The polypeptide is Peptidyl-prolyl cis-trans isomerase A (PPIA) (Bos taurus (Bovine)).